Reading from the N-terminus, the 476-residue chain is Cysteine--tRNA ligase (476 aa).

Cys36 provides a ligand contact to Zn(2+). Residues 38–48 carry the 'HIGH' region motif; it reads PTVYDYAHIGN. 3 residues coordinate Zn(2+): Cys221, His246, and Glu250. A 'KMSKS' region motif is present at residues 278–282; the sequence is KMSKS. Lys281 contacts ATP.

This sequence belongs to the class-I aminoacyl-tRNA synthetase family. As to quaternary structure, monomer. Zn(2+) serves as cofactor.

It is found in the cytoplasm. It carries out the reaction tRNA(Cys) + L-cysteine + ATP = L-cysteinyl-tRNA(Cys) + AMP + diphosphate. The protein is Cysteine--tRNA ligase of Chlamydia caviae (strain ATCC VR-813 / DSM 19441 / 03DC25 / GPIC) (Chlamydophila caviae).